A 205-amino-acid chain; its full sequence is Guanylate kinase (205 aa).

A Guanylate kinase-like domain is found at Gly3 to Leu181. Ala10–Thr17 serves as a coordination point for ATP.

This sequence belongs to the guanylate kinase family.

Its subcellular location is the cytoplasm. It carries out the reaction GMP + ATP = GDP + ADP. Its function is as follows. Essential for recycling GMP and indirectly, cGMP. The chain is Guanylate kinase from Hydrogenovibrio crunogenus (strain DSM 25203 / XCL-2) (Thiomicrospira crunogena).